Consider the following 543-residue polypeptide: CTP synthase (543 aa).

An amidoligase domain region spans residues 1 to 265 (MARYIFITGG…DDEVLAAFGI (265 aa)). A CTP-binding site is contributed by S13. Residue S13 participates in UTP binding. 14-19 (SLGKGL) is a binding site for ATP. Position 54 (Y54) interacts with L-glutamine. D71 contacts ATP. The Mg(2+) site is built by D71 and E139. CTP is bound by residues 146 to 148 (DIE), 186 to 191 (KTKPTQ), and K222. UTP-binding positions include 186–191 (KTKPTQ) and K222. 238–240 (RDA) serves as a coordination point for ATP. Residues 291 to 542 (TIAIVGKYTG…IQAAVVQSRL (252 aa)) form the Glutamine amidotransferase type-1 domain. G353 lines the L-glutamine pocket. C380 functions as the Nucleophile; for glutamine hydrolysis in the catalytic mechanism. L-glutamine-binding positions include 381-384 (FGMQ), E404, and R470. Residues H515 and E517 contribute to the active site.

The protein belongs to the CTP synthase family. Homotetramer.

The enzyme catalyses UTP + L-glutamine + ATP + H2O = CTP + L-glutamate + ADP + phosphate + 2 H(+). It catalyses the reaction L-glutamine + H2O = L-glutamate + NH4(+). The catalysed reaction is UTP + NH4(+) + ATP = CTP + ADP + phosphate + 2 H(+). It participates in pyrimidine metabolism; CTP biosynthesis via de novo pathway; CTP from UDP: step 2/2. Its activity is regulated as follows. Allosterically activated by GTP, when glutamine is the substrate; GTP has no effect on the reaction when ammonia is the substrate. The allosteric effector GTP functions by stabilizing the protein conformation that binds the tetrahedral intermediate(s) formed during glutamine hydrolysis. Inhibited by the product CTP, via allosteric rather than competitive inhibition. Its function is as follows. Catalyzes the ATP-dependent amination of UTP to CTP with either L-glutamine or ammonia as the source of nitrogen. Regulates intracellular CTP levels through interactions with the four ribonucleotide triphosphates. The chain is CTP synthase from Nitrobacter winogradskyi (strain ATCC 25391 / DSM 10237 / CIP 104748 / NCIMB 11846 / Nb-255).